The chain runs to 353 residues: Quinolinate synthase (353 aa).

Positions 47 and 68 each coordinate iminosuccinate. Cys-113 serves as a coordination point for [4Fe-4S] cluster. Iminosuccinate contacts are provided by residues 139–141 (YAN) and Ser-156. [4Fe-4S] cluster is bound at residue Cys-200. Iminosuccinate is bound by residues 226-228 (HPE) and Thr-243. Cys-297 is a [4Fe-4S] cluster binding site.

This sequence belongs to the quinolinate synthase family. Type 1 subfamily. It depends on [4Fe-4S] cluster as a cofactor.

Its subcellular location is the cytoplasm. The enzyme catalyses iminosuccinate + dihydroxyacetone phosphate = quinolinate + phosphate + 2 H2O + H(+). Its pathway is cofactor biosynthesis; NAD(+) biosynthesis; quinolinate from iminoaspartate: step 1/1. In terms of biological role, catalyzes the condensation of iminoaspartate with dihydroxyacetone phosphate to form quinolinate. The protein is Quinolinate synthase of Erwinia tasmaniensis (strain DSM 17950 / CFBP 7177 / CIP 109463 / NCPPB 4357 / Et1/99).